Consider the following 119-residue polypeptide: Large ribosomal subunit protein uL22 (119 aa).

Belongs to the universal ribosomal protein uL22 family. Part of the 50S ribosomal subunit.

Functionally, this protein binds specifically to 23S rRNA; its binding is stimulated by other ribosomal proteins, e.g. L4, L17, and L20. It is important during the early stages of 50S assembly. It makes multiple contacts with different domains of the 23S rRNA in the assembled 50S subunit and ribosome. The globular domain of the protein is located near the polypeptide exit tunnel on the outside of the subunit, while an extended beta-hairpin is found that lines the wall of the exit tunnel in the center of the 70S ribosome. The protein is Large ribosomal subunit protein uL22 of Rickettsia felis (strain ATCC VR-1525 / URRWXCal2) (Rickettsia azadi).